The primary structure comprises 166 residues: Large ribosomal subunit protein bL17 (166 aa).

The interval 122-166 is disordered; sequence PESAPVKAKQDRSKRVRGSKKTQEGSEKAEVSASAGEAAAVTEEK. Residues 142 to 151 are compositionally biased toward basic and acidic residues; sequence KTQEGSEKAE. A compositionally biased stretch (low complexity) spans 152–166; it reads VSASAGEAAAVTEEK.

It belongs to the bacterial ribosomal protein bL17 family. Part of the 50S ribosomal subunit. Contacts protein L32.

The chain is Large ribosomal subunit protein bL17 from Chlorobium phaeobacteroides (strain BS1).